A 439-amino-acid polypeptide reads, in one-letter code: Xylose isomerase (439 aa).

Active-site residues include H99 and D102. 7 residues coordinate Mg(2+): E230, E266, H269, D294, D305, D307, and D337.

It belongs to the xylose isomerase family. As to quaternary structure, homotetramer. Mg(2+) is required as a cofactor.

It localises to the cytoplasm. It carries out the reaction alpha-D-xylose = alpha-D-xylulofuranose. In Oceanobacillus iheyensis (strain DSM 14371 / CIP 107618 / JCM 11309 / KCTC 3954 / HTE831), this protein is Xylose isomerase.